Reading from the N-terminus, the 374-residue chain is Alcohol dehydrogenase class-3 (374 aa).

Ala-2 is modified (N-acetylalanine). 7 residues coordinate Zn(2+): Cys-45, His-67, Cys-97, Cys-100, Cys-103, Cys-111, and Cys-174. N6-succinyllysine is present on Lys-233. Ser-247 carries the post-translational modification Phosphoserine. Lys-315 bears the N6-succinyllysine mark. 2 positions are modified to phosphoserine: Ser-324 and Ser-351.

It belongs to the zinc-containing alcohol dehydrogenase family. Class-III subfamily. In terms of assembly, homodimer. Zn(2+) is required as a cofactor.

The protein resides in the cytoplasm. The catalysed reaction is a primary alcohol + NAD(+) = an aldehyde + NADH + H(+). The enzyme catalyses a secondary alcohol + NAD(+) = a ketone + NADH + H(+). It carries out the reaction S-(hydroxymethyl)glutathione + NADP(+) = S-formylglutathione + NADPH + H(+). It catalyses the reaction S-(hydroxymethyl)glutathione + NAD(+) = S-formylglutathione + NADH + H(+). The catalysed reaction is 20-oxo-(5Z,8Z,11Z,14Z)-eicosatetraenoate + NAD(+) + H2O = (5Z,8Z,11Z,14Z)-eicosatetraenedioate + NADH + 2 H(+). The enzyme catalyses 20-hydroxy-(5Z,8Z,11Z,14Z)-eicosatetraenoate + NAD(+) = 20-oxo-(5Z,8Z,11Z,14Z)-eicosatetraenoate + NADH + H(+). It carries out the reaction S-nitrosoglutathione + NADH + H(+) = S-(hydroxysulfenamide)glutathione + NAD(+). Catalyzes the oxidation of long-chain primary alcohols and the oxidation of S-(hydroxymethyl) glutathione. Also oxidizes long chain omega-hydroxy fatty acids, such as 20-HETE, producing both the intermediate aldehyde, 20-oxoarachidonate and the end product, a dicarboxylic acid, (5Z,8Z,11Z,14Z)-eicosatetraenedioate. Class-III ADH is remarkably ineffective in oxidizing ethanol. Required for clearance of cellular formaldehyde, a cytotoxic and carcinogenic metabolite that induces DNA damage. Also acts as a S-nitroso-glutathione reductase by catalyzing the NADH-dependent reduction of S-nitrosoglutathione, thereby regulating protein S-nitrosylation. This Homo sapiens (Human) protein is Alcohol dehydrogenase class-3.